We begin with the raw amino-acid sequence, 490 residues long: Betaine aldehyde dehydrogenase (490 aa).

K(+)-binding residues include T26, I27, and D93. G150–W152 provides a ligand contact to NAD(+). K162 functions as the Charge relay system in the catalytic mechanism. Residue K176–E179 participates in NAD(+) binding. V180 is a K(+) binding site. Residue G230–S233 participates in NAD(+) binding. Position 246 (L246) interacts with K(+). E252 (proton acceptor) is an active-site residue. G254, C286, and E387 together coordinate NAD(+). The active-site Nucleophile is C286. At C286 the chain carries Cysteine sulfenic acid (-SOH). K(+)-binding residues include K457 and G460. The Charge relay system role is filled by E464.

Belongs to the aldehyde dehydrogenase family. As to quaternary structure, dimer of dimers. Requires K(+) as cofactor.

It carries out the reaction betaine aldehyde + NAD(+) + H2O = glycine betaine + NADH + 2 H(+). Its pathway is amine and polyamine biosynthesis; betaine biosynthesis via choline pathway; betaine from betaine aldehyde: step 1/1. Involved in the biosynthesis of the osmoprotectant glycine betaine. Catalyzes the irreversible oxidation of betaine aldehyde to the corresponding acid. The protein is Betaine aldehyde dehydrogenase of Escherichia coli O9:H4 (strain HS).